A 471-amino-acid polypeptide reads, in one-letter code: Actin-related protein 8 (471 aa).

The F-box domain occupies 40–86 (LGAFDQLPMDILVQILMMMEPKDAVKLGLTCKAWKCVASGNRLWIFY). 256–259 (NIGF) contacts ATP.

It belongs to the actin family. Plant ARP8 subfamily. In terms of tissue distribution, ubiquitously expressed in all organs and cell types. Higher expression in seedlings.

It is found in the nucleus. The protein resides in the nucleolus. It localises to the cytoplasm. The sequence is that of Actin-related protein 8 (ARP8) from Arabidopsis thaliana (Mouse-ear cress).